The primary structure comprises 79 residues: Major outer membrane lipoprotein Lpp 2 (79 aa).

The signal sequence occupies residues 1 to 21 (MNRTNKLILGAVVLGSTLLAG). Residue cysteine 22 is the site of N-palmitoyl cysteine attachment. The S-diacylglycerol cysteine moiety is linked to residue cysteine 22. Repeats lie at residues 25 to 35 (NAKIDQLSSDV) and 39 to 49 (SAKVDQLSNDV). A coiled-coil region spans residues 28–69 (IDQLSSDVQTLSAKVDQLSNDVNAMRSDVQAAKDDAARANQR). Lysine 79 carries the N6-murein peptidoglycan lysine modification.

It belongs to the Lpp family. In terms of assembly, homotrimer.

It is found in the cell outer membrane. It localises to the secreted. Its subcellular location is the cell wall. In terms of biological role, a highly abundant outer membrane lipoprotein that controls the distance between the inner and outer membranes. The only protein known to be covalently linked to the peptidoglycan network (PGN). Also non-covalently binds the PGN. The link between the cell outer membrane and PGN contributes to maintenance of the structural and functional integrity of the cell envelope, and maintains the correct distance between the PGN and the outer membrane. The sequence is that of Major outer membrane lipoprotein Lpp 2 from Salmonella typhi.